Consider the following 66-residue polypeptide: Large ribosomal subunit protein uL29 (66 aa).

Belongs to the universal ribosomal protein uL29 family.

The polypeptide is Large ribosomal subunit protein uL29 (Thermococcus gammatolerans (strain DSM 15229 / JCM 11827 / EJ3)).